The chain runs to 675 residues: Vitamin K-dependent protein S (675 aa).

A signal peptide spans 1 to 24 (MRVLSVRFRVLLACLALVLPNSET). The propeptide occupies 25 to 41 (NFLSKERASQVLVRKRR). In terms of domain architecture, Gla spans 42–87 (ANTLLEETKKGNLERECIEELCNKEEAREVFENNPETDYFYPKYLG). Glu-47, Glu-48, Glu-55, Glu-57, Glu-60, Glu-61, Glu-66, Glu-67, Glu-70, Glu-73, and Glu-77 each carry 4-carboxyglutamate. An intrachain disulfide couples Cys-58 to Cys-63. Residues 88–116 (CLGAFRVGAFSAARQSANAYPDLRSCVNA) form a thrombin-sensitive region. In terms of domain architecture, EGF-like 1 spans 117–155 (IPDQCDPMPCNEDGYLSCKDGQGAFTCICKPGWQGDKCQ). 13 disulfides stabilise this stretch: Cys-121–Cys-134, Cys-126–Cys-143, Cys-145–Cys-154, Cys-161–Cys-175, Cys-171–Cys-184, Cys-186–Cys-199, Cys-205–Cys-217, Cys-212–Cys-226, Cys-228–Cys-241, Cys-247–Cys-256, Cys-252–Cys-265, Cys-267–Cys-282, and Cys-449–Cys-475. Asp-136 is modified ((3R)-3-hydroxyaspartate). The EGF-like 2; calcium-binding domain occupies 157-200 (DINECKDPSNINGGCSQTCDNTPGSYHCSCKIGFAMLTNKKDCK). The EGF-like 3; calcium-binding domain maps to 201–242 (DVDECSLKPSVCGTAVCKNIPGDFECECPNGYRYDPSSKSCK). The EGF-like 4; calcium-binding domain occupies 243 to 283 (DVDECSENTCAQLCVNYPGGYSCYCDGKKGFKLAQDQRSCE). Laminin G-like domains are found at residues 299–475 (LLYL…NKHC) and 484–665 (YYPG…AHSC). Asn-499 and Asn-509 each carry an N-linked (GlcNAc...) asparagine glycan.

Post-translationally, the iron and 2-oxoglutarate dependent 3-hydroxylation of aspartate and asparagine is (R) stereospecific within EGF domains. Plasma.

It is found in the secreted. Its function is as follows. Anticoagulant plasma protein; it is a cofactor to activated protein C in the degradation of coagulation factors Va and VIIIa. It helps to prevent coagulation and stimulating fibrinolysis. This chain is Vitamin K-dependent protein S (Pros1), found in Rattus norvegicus (Rat).